The chain runs to 584 residues: MCGILAVLGCSDDSQAKRVRVLELSRRLRHRGPDWSGLYQNGDNYLAHQRLAVIDPASGDQPLFNEDKTIVVTVNGEIYNHEELRKRLKNHKFRTGSDCEVIAHLYEEYGVDFVDMLDGIFSFVLLDTRDNSFMVARDAIGVTSLYIGWGLDGSVWISSEMKGLNDDCEHFETFPPGHFYSSKLGGFKQWYNPPWFNESVPSTPYEPLAIRRAFENAVIKRLMTDVPFGVLLSGGLDSSLVASITARHLAGTKAAKQWGPQLHSFCVGLEGSPDLKAGKEVAEYLGTVHHEFHFSVQDGIDAIEDVIYHVETYDVTTIRASTPMFLMSRKIKSLGVKMVLSGEGADEIFGGYLYFHKAPNKKEFHQETCRKIKALHKYDCLRANKSTSAFGLEARVPFLDKDFINTAMSLDPESKMIKPEEGRIEKWVLRRAFDDEERPYLPKHILYRQKEQFSDGVGYSWIDGLKDHAAQNVNDKMMSNAGHIFPHNTPNTKEAYYYRMIFERFFPQNSARLTVPGGATVACSTAKAVEWDASWSNNMDPSGRAAIGVHLSAYDGKNVALTIPPLKAIDNMPMMMGQGVVIQS.

Catalysis depends on Cys2, which acts as the For GATase activity. Residues 2-185 enclose the Glutamine amidotransferase type-2 domain; the sequence is CGILAVLGCS…PGHFYSSKLG (184 aa). L-glutamine contacts are provided by residues 50-54, 75-77, and Asp98; these read RLAVI and NGE. Residues 193 to 516 enclose the Asparagine synthetase domain; sequence PPWFNESVPS…PQNSARLTVP (324 aa). ATP-binding positions include Leu231, Val267, and 341–342; that span reads SG.

It carries out the reaction L-aspartate + L-glutamine + ATP + H2O = L-asparagine + L-glutamate + AMP + diphosphate + H(+). Its pathway is amino-acid biosynthesis; L-asparagine biosynthesis; L-asparagine from L-aspartate (L-Gln route): step 1/1. In terms of biological role, essential for nitrogen assimilation, distribution and remobilization within the plant via the phloem. This chain is Asparagine synthetase [glutamine-hydrolyzing] 1 (ASN1), found in Arabidopsis thaliana (Mouse-ear cress).